The following is a 509-amino-acid chain: Cytochrome P450 monooxygenase traB (509 aa).

The helical transmembrane segment at 8–28 (LVELVSITGGLIVLFIAYTGF) threads the bilayer. Residue Cys453 participates in heme binding.

The protein belongs to the cytochrome P450 family. It depends on heme as a cofactor.

It is found in the membrane. It participates in secondary metabolite biosynthesis. Functionally, cytochrome P450 monooxygenase; part of the tra gene cluster that produces terrestric acid. The clavatol biosynthesis cluster cla and the terrestric acid cluster tra are both involved in the production of peniphenones and penilactones. The non-reducing PKS claF is responsible for the formation of clavatol from successive condensations of 3 malonyl-CoA units, presumably with a simple acetyl-CoA starter unit, and 2 methylation steps. The esterase claE probably collaborates with claF by catalyzing the hydrolysis of ACP-bound acyl intermediates to free the ACP from stalled intermediates. The clavatol oxidase claD then converts clavatol to hydroxyclavatol. Spontaneous dehydration of hydroxyclavatol leads to the accumulation of the highly active ortho-quinone methide. On the other hand, the PKS-NRPS hybrid traA is involved in the formation of crustosic acid, with the help of traB and traD. The polyketide synthase module (PKS) of traA is responsible for the synthesis of the polyketide backbone via the condensation of an acetyl-CoA starter unit with 3 malonyl-CoA units. The downstream nonribosomal peptide synthetase (NRPS) module then amidates the carboxyl end of the polyketide with L-malic acid. Because traA lacks a designated enoylreductase (ER) domain, the required activity is provided the enoyl reductase traG. Crustosic acid undergoes decarboxylation and isomerization to the terrestric acid, catalyzed by the 2-oxoglutarate-dependent dioxygenase traH. Both acids are further converted to the 2 gamma-butyrolactones (R)-5-methyltetronic acid and (S)-5-carboxylmethyltetronic acid, with involvement of the cytochrome P450 monooxygenase claJ. Spontaneous addition of the methide to these gamma-butyrolactones leads to peniphenone D and penilactone D, which undergo again stereospecific attacking by methide to give penilactones A and B. The polypeptide is Cytochrome P450 monooxygenase traB (Penicillium crustosum (Blue mold fungus)).